The chain runs to 598 residues: MATRIKILPEQLTNKIAAGEVVERPASVVKELVENALDAGCSEVMVEIEAGGKRLIRVSDTGCGMTREDALLALERHATSKIANDEDLFSLATLGFRGEALPSVASVSRFTLATREKGSLEGTEIYAEGGRIKEVKACGMAEGTVISVRNLFFNTPARLKFMKSSETEAGHVGDLLTRLAISRPDIRFIYTNDGKTVFRALNADLRERVATLLGRTLSQDLYPLDFCDGQLNVTGLVGKPECSRSAASHVYTYINGRFIRDKVVQHAVLQAYRNFMERGRYPVVVLFISVPAAEVDVNVHPTKHEVRFREQGRVHDAIQEAVESVLRSSPWVKTQPVVQKTQASTSIAAARIAQVRESLTQYRPQKTTQQSFKMSTPAVPASFRETSLPDPVPVADAAPAPEVERGYFSGLSVIGQFNAAYILCQDGNSLVIIDQHAAHERVAFERLKTQHAAMGVESQRLLFPETVEFSFKEGAVIREHQTELDRVGFSLEEFGGSTWLLNAVPHLLSGNDYVKTLRDILEELQSLGRSRSFQDILEDILARIACHSVVRGSHCLSQQEIKALFQQMDTTEFSSNCPHGRPVLHTLTLAEIERMFKR.

This sequence belongs to the DNA mismatch repair MutL/HexB family.

In terms of biological role, this protein is involved in the repair of mismatches in DNA. It is required for dam-dependent methyl-directed DNA mismatch repair. May act as a 'molecular matchmaker', a protein that promotes the formation of a stable complex between two or more DNA-binding proteins in an ATP-dependent manner without itself being part of a final effector complex. The chain is DNA mismatch repair protein MutL from Geotalea daltonii (strain DSM 22248 / JCM 15807 / FRC-32) (Geobacter daltonii).